A 377-amino-acid polypeptide reads, in one-letter code: Nitric oxide reductase FlRd-NAD(+) reductase (377 aa).

It belongs to the FAD-dependent oxidoreductase family. FAD serves as cofactor.

It localises to the cytoplasm. It carries out the reaction 2 reduced [nitric oxide reductase rubredoxin domain] + NAD(+) + H(+) = 2 oxidized [nitric oxide reductase rubredoxin domain] + NADH. The protein operates within nitrogen metabolism; nitric oxide reduction. Functionally, one of at least two accessory proteins for anaerobic nitric oxide (NO) reductase. Reduces the rubredoxin moiety of NO reductase. The chain is Nitric oxide reductase FlRd-NAD(+) reductase from Escherichia fergusonii (strain ATCC 35469 / DSM 13698 / CCUG 18766 / IAM 14443 / JCM 21226 / LMG 7866 / NBRC 102419 / NCTC 12128 / CDC 0568-73).